We begin with the raw amino-acid sequence, 416 residues long: MVASGGRPDGPPSITPESPLIVGGREWQGMAGSCWNITYVQDSVGPATSTLMFVAGVVGNGLALGILGARRRSHPSAFAVLVTGLAVTDLLGTCFLSPAVFVAYARNSSLLGLAHGGTMLCDTFAFAMTFFGLASTLILFAMAVERCLALSHPYLYAQLDGPRCARLALPAIYAFCCLFCSLPLLGLGEHQQYCPGSWCFIRMRSPQPGGCAFSLAYASLMALLVTSIFFCNGSVTLSLCHMYRQQRRHHGSFVPTSRAREDEVYHLILLALMTGIMAVCSLPLTIRGFTQAIAPDSREMGDLHAFRFNAFNPILDPWVFILFRKAVFQRLKFWLCCLCARSVHGDLQTPLSRPVSGRRDTLAPDSLQAKEGNWVPLSTWGTGQVAPLTAVPLSGGDGCSVGMPSKTEAVVACSLC.

The Extracellular segment spans residues 1–45 (MVASGGRPDGPPSITPESPLIVGGREWQGMAGSCWNITYVQDSVG). 2 disulfide bridges follow: Cys-34–Cys-194 and Cys-121–Cys-199. N-linked (GlcNAc...) asparagine glycosylation occurs at Asn-36. A helical transmembrane segment spans residues 46 to 67 (PATSTLMFVAGVVGNGLALGIL). At 68 to 80 (GARRRSHPSAFAV) the chain is on the cytoplasmic side. Residues 81 to 105 (LVTGLAVTDLLGTCFLSPAVFVAYA) traverse the membrane as a helical segment. At 106–123 (RNSSLLGLAHGGTMLCDT) the chain is on the extracellular side. Residues 124 to 144 (FAFAMTFFGLASTLILFAMAV) form a helical membrane-spanning segment. Residues 145–163 (ERCLALSHPYLYAQLDGPR) are Cytoplasmic-facing. Residues 164 to 187 (CARLALPAIYAFCCLFCSLPLLGL) form a helical membrane-spanning segment. Over 188-215 (GEHQQYCPGSWCFIRMRSPQPGGCAFSL) the chain is Extracellular. A helical membrane pass occupies residues 216 to 237 (AYASLMALLVTSIFFCNGSVTL). The Cytoplasmic portion of the chain corresponds to 238–264 (SLCHMYRQQRRHHGSFVPTSRAREDEV). Residues 265–289 (YHLILLALMTGIMAVCSLPLTIRGF) traverse the membrane as a helical segment. Over 290–302 (TQAIAPDSREMGD) the chain is Extracellular. Residues 303–323 (LHAFRFNAFNPILDPWVFILF) traverse the membrane as a helical segment. Topologically, residues 324–416 (RKAVFQRLKF…TEAVVACSLC (93 aa)) are cytoplasmic. Position 366 is a phosphoserine (Ser-366). Cys-413 carries the post-translational modification Cysteine methyl ester. Cys-413 is lipidated: S-farnesyl cysteine. A propeptide spans 414–416 (SLC) (removed in mature form).

Belongs to the G-protein coupled receptor 1 family. Interacts (non-isoprenylated C-terminus) with PDZK1. Post-translationally, isoprenylation does not influence ligand binding but is required for efficient coupling to the effectors adenylyl cyclase and phospholipase C.

The protein resides in the cell membrane. Functionally, receptor for prostacyclin (prostaglandin I2 or PGI2). The activity of this receptor is mediated by G(s) proteins which activate adenylate cyclase. This Rattus norvegicus (Rat) protein is Prostacyclin receptor (Ptgir).